A 255-amino-acid polypeptide reads, in one-letter code: Protein N-terminal and lysine N-methyltransferase efm7 (255 aa).

Positions 1 to 25 are disordered; it reads MADNDFEGFGIFEEPEGFRPSTPPP. S-adenosyl-L-methionine-binding positions include Trp58, 84-86, Asp106, Trp137, and Ser162; that span reads GAG.

Belongs to the class I-like SAM-binding methyltransferase superfamily. EFM7 family.

The protein resides in the cytoplasm. Its function is as follows. S-adenosyl-L-methionine-dependent protein methyltransferase that trimethylates the N-terminal glycine 'Gly-2' of elongation factor 1-alpha, before also catalyzing the mono- and dimethylation of 'Lys-3'. This chain is Protein N-terminal and lysine N-methyltransferase efm7, found in Schizosaccharomyces pombe (strain 972 / ATCC 24843) (Fission yeast).